Reading from the N-terminus, the 136-residue chain is Heavy metal-associated isoprenylated plant protein 19 (136 aa).

Positions 13–77 (YMDVEFNVSM…LKKKTGKRVK (65 aa)) constitute an HMA domain. A metal cation-binding residues include C24 and C27. A Cysteine methyl ester modification is found at C133. Residue C133 is the site of S-farnesyl cysteine attachment. A propeptide spans 134 to 136 (SIS) (removed in mature form).

Belongs to the HIPP family.

In terms of biological role, heavy-metal-binding protein. In Arabidopsis thaliana (Mouse-ear cress), this protein is Heavy metal-associated isoprenylated plant protein 19.